The following is a 710-amino-acid chain: Aminopeptidase P2 (710 aa).

The N-terminal 79 residues, 1–79, are a transit peptide targeting the chloroplast; sequence MIPLTLSSPS…IRKAQTKVVV (79 aa). Residues Arg147 and His486 each coordinate a peptide. 3 residues coordinate Mn(2+): Asp506, Asp517, and His580. A peptide is bound by residues His580, His589, and Glu614. Positions 614 and 628 each coordinate Mn(2+).

This sequence belongs to the peptidase M24B family. In terms of assembly, homodimer. The cofactor is Mn(2+).

The protein resides in the plastid. It localises to the chloroplast. It catalyses the reaction Release of any N-terminal amino acid, including proline, that is linked to proline, even from a dipeptide or tripeptide.. Its function is as follows. Catalyzes the removal of a penultimate prolyl residue from the N-termini of peptides, such as Arg-Pro-Pro. The protein is Aminopeptidase P2 of Arabidopsis thaliana (Mouse-ear cress).